The following is a 105-amino-acid chain: UPF0145 protein VP1283 (105 aa).

This sequence belongs to the UPF0145 family.

This Vibrio parahaemolyticus serotype O3:K6 (strain RIMD 2210633) protein is UPF0145 protein VP1283.